Consider the following 154-residue polypeptide: Insulin-like growth factor 1 (154 aa).

The tract at residues 50–78 is b; sequence GPETLCGAELVDALQFVCGDRGFYFNKPT. 3 disulfides stabilise this stretch: Cys55–Cys97, Cys67–Cys110, and Cys96–Cys101. Residues 79–90 are c; that stretch reads GYGSSSRRAPQT. Positions 91-111 are a; it reads GIVDECCFRSCDLRRLEMYCA. The interval 112–119 is d; that stretch reads PLKPAKSA. A propeptide spans 120-154 (e peptide); sequence RSVRAQRHTDMPKAQKEVHLKNTSRGSAGNKNYRM. The segment at 121-154 is disordered; that stretch reads SVRAQRHTDMPKAQKEVHLKNTSRGSAGNKNYRM. A compositionally biased stretch (basic and acidic residues) spans 126-139; that stretch reads RHTDMPKAQKEVHL. A compositionally biased stretch (polar residues) spans 140 to 154; the sequence is KNTSRGSAGNKNYRM.

It belongs to the insulin family. In terms of assembly, forms a ternary complex with IGFR1 and ITGAV:ITGB3. Forms a ternary complex with IGFR1 and ITGA6:ITGB4. Forms a ternary complex with IGFBP3 and ALS.

The protein localises to the secreted. Its function is as follows. The insulin-like growth factors, isolated from plasma, are structurally and functionally related to insulin but have a much higher growth-promoting activity. May be a physiological regulator of [1-14C]-2-deoxy-D-glucose (2DG) transport and glycogen synthesis in osteoblasts. Stimulates glucose transport in bone-derived osteoblastic (PyMS) cells and is effective at much lower concentrations than insulin, not only regarding glycogen and DNA synthesis but also with regard to enhancing glucose uptake. May play a role in synapse maturation. Ca(2+)-dependent exocytosis of IGF1 is required for sensory perception of smell in the olfactory bulb. Acts as a ligand for IGF1R. Binds to the alpha subunit of IGF1R, leading to the activation of the intrinsic tyrosine kinase activity which autophosphorylates tyrosine residues in the beta subunit thus initiating a cascade of down-stream signaling events leading to activation of the PI3K-AKT/PKB and the Ras-MAPK pathways. Binds to integrins ITGAV:ITGB3 and ITGA6:ITGB4. Its binding to integrins and subsequent ternary complex formation with integrins and IGFR1 are essential for IGF1 signaling. Induces the phosphorylation and activation of IGFR1, MAPK3/ERK1, MAPK1/ERK2 and AKT1. As part of the MAPK/ERK signaling pathway, acts as a negative regulator of apoptosis in cardiomyocytes via promotion of STUB1/CHIP-mediated ubiquitination and degradation of ICER-type isoforms of CREM. The chain is Insulin-like growth factor 1 from Bos taurus (Bovine).